The following is a 54-amino-acid chain: U7-myrmicitoxin-Tb1a (54 aa).

Positions 1–26 (MQLSHLLLAFAMIFVMTIIHTPQVQA) are cleaved as a signal peptide. The propeptide occupies 27 to 36 (DAMADADADA). An intrachain disulfide couples Cys40 to Cys49.

As to expression, expressed by the venom gland.

The protein resides in the secreted. Functionally, venom protein with unknown function. Does not induce paralysis when a high dose is administered by intrathoracic injection into the blowfly Lucilia caesar. This Tetramorium bicarinatum (Tramp ant) protein is U7-myrmicitoxin-Tb1a.